Reading from the N-terminus, the 208-residue chain is Cytochrome c oxidase assembly protein CtaG (208 aa).

Residues 1 to 19 (MPDTQPNVSPNPIRRRGLG) lie on the Cytoplasmic side of the membrane. A helical; Signal-anchor for type II membrane protein membrane pass occupies residues 20-42 (RDATVASICGLVVALMVGASFAA). Residues 43-208 (VPFYNWFCRT…TAPDKRKGNL (166 aa)) lie on the Periplasmic side of the membrane.

The protein belongs to the COX11/CtaG family.

The protein localises to the cell inner membrane. In terms of biological role, exerts its effect at some terminal stage of cytochrome c oxidase synthesis, probably by being involved in the insertion of the copper B into subunit I. This Rhodopseudomonas palustris (strain HaA2) protein is Cytochrome c oxidase assembly protein CtaG.